A 572-amino-acid polypeptide reads, in one-letter code: E3 SUMO-protein ligase PIAS2 (572 aa).

One can recognise an SAP domain in the interval 11–45 (VSSFRVSELQVLLGFAGRNKSGRKHDLLMRALHLL). The LXXLL motif signature appears at 19 to 23 (LQVLL). Glycyl lysine isopeptide (Lys-Gly) (interchain with G-Cter in SUMO2) cross-links involve residues K46 and K249. The 166-residue stretch at 134–299 (QPSPPIPPVH…SMSVYLVRQL (166 aa)) folds into the PINIT domain. An SP-RING-type zinc finger spans residues 331–412 (PDSEIATTSL…FMEILNDCSD (82 aa)). Residues C362, H364, C385, and C388 each contribute to the Zn(2+) site. Residues K430, K435, K443, and K452 each participate in a glycyl lysine isopeptide (Lys-Gly) (interchain with G-Cter in SUMO2) cross-link. Residues 467-473 (IDVIDLT) are SUMO1-binding. 3 positions are modified to phosphoserine: S476, S477, and S478. The Nuclear localization signal motif lies at 484–492 (PPAKRKCIF). A Glycyl lysine isopeptide (Lys-Gly) (interchain with G-Cter in SUMO2) cross-link involves residue K489. S499 is subject to Phosphoserine. K502 participates in a covalent cross-link: Glycyl lysine isopeptide (Lys-Gly) (interchain with G-Cter in SUMO2). A disordered region spans residues 523 to 572 (AAIPPSLTDYSVPFHHTPVSSMSSDLPGEQRRNDINNEVQLGTSSDTVQQ). A compositionally biased stretch (polar residues) spans 558–572 (NNEVQLGTSSDTVQQ).

This sequence belongs to the PIAS family. As to quaternary structure, binds SUMO1 and UBE2I. Interacts with AXIN1, JUN, MDM2, PARK7, TP53 and TP73 isoform alpha, but not TP73 isoform beta. Interacts with STAT4 following IL12 and IFN-alpha stimulation of T-cells. Interacts also with GTF2I, GTF2IRD1, IKFZ1, DAB2 and MSX2, as well as with several steroid receptors, including ESR1, ESR2, NR3C1, PGR, AR, and with NCOA2. Sumoylation of a target protein seems to enhance the interaction. Binds to sumoylated ELK1. Binds DNA, such as CDKN1A promoter, in a sequence-specific manner. Interacts with PLAG1. Interacts with KLF8; the interaction results in SUMO ligation and repression of KLF8 transcriptional activity and of its cell cycle progression into G(1) phase. Interacts with IFIH1/MDA5. Interacts with PML. Interacts with PRDM1. In terms of processing, sumoylated. Mainly expressed in testis.

Its subcellular location is the nucleus speckle. It is found in the nucleus. The protein resides in the PML body. The protein operates within protein modification; protein sumoylation. Its function is as follows. Functions as an E3-type small ubiquitin-like modifier (SUMO) ligase, stabilizing the interaction between UBE2I and the substrate, and as a SUMO-tethering factor. Plays a crucial role as a transcriptional coregulation in various cellular pathways, including the STAT pathway, the p53 pathway and the steroid hormone signaling pathway. The effects of this transcriptional coregulation, transactivation or silencing may vary depending upon the biological context and PIAS2 isoform studied. However, it seems to be mostly involved in gene silencing. Binds to sumoylated ELK1 and enhances its transcriptional activity by preventing recruitment of HDAC2 by ELK1, thus reversing SUMO-mediated repression of ELK1 transactivation activity. Sumoylates PML at'Lys-65' and 'Lys-160'. The polypeptide is E3 SUMO-protein ligase PIAS2 (Pias2) (Rattus norvegicus (Rat)).